Reading from the N-terminus, the 284-residue chain is Pantothenate synthetase (284 aa).

30–37 (MGALHEGH) serves as a coordination point for ATP. The active-site Proton donor is the His37. Gln61 provides a ligand contact to (R)-pantoate. Gln61 serves as a coordination point for beta-alanine. Residue 147 to 150 (GEKD) participates in ATP binding. (R)-pantoate is bound at residue Gln153. Residues Val176 and 184-187 (TSSR) each bind ATP.

It belongs to the pantothenate synthetase family. Homodimer.

The protein resides in the cytoplasm. It carries out the reaction (R)-pantoate + beta-alanine + ATP = (R)-pantothenate + AMP + diphosphate + H(+). Its pathway is cofactor biosynthesis; (R)-pantothenate biosynthesis; (R)-pantothenate from (R)-pantoate and beta-alanine: step 1/1. Its function is as follows. Catalyzes the condensation of pantoate with beta-alanine in an ATP-dependent reaction via a pantoyl-adenylate intermediate. The sequence is that of Pantothenate synthetase from Chlorobaculum tepidum (strain ATCC 49652 / DSM 12025 / NBRC 103806 / TLS) (Chlorobium tepidum).